The primary structure comprises 860 residues: DNA mismatch repair protein MutS (860 aa).

621–628 (GPNMGGKS) serves as a coordination point for ATP.

The protein belongs to the DNA mismatch repair MutS family.

Its function is as follows. This protein is involved in the repair of mismatches in DNA. It is possible that it carries out the mismatch recognition step. This protein has a weak ATPase activity. The polypeptide is DNA mismatch repair protein MutS (Salmonella arizonae (strain ATCC BAA-731 / CDC346-86 / RSK2980)).